Reading from the N-terminus, the 330-residue chain is 5'-AMP-activated protein kinase subunit gamma-1 (330 aa).

Residues 1 to 13 (METVTSSDSSSAV) show a composition bias toward polar residues. The interval 1-26 (METVTSSDSSSAVENEHPQDTPESNN) is disordered. CBS domains lie at 43–103 (PTSS…KSAL), 125–187 (SFKP…PKPE), and 198–260 (IGTY…NLDV). ADP-binding positions include Arg70, 85-90 (MLTITD), Val130, 151-152 (HR), and Lys170. AMP-binding positions include Arg70, 85–90 (MLTITD), Val130, His151, 151–152 (HR), Lys170, Thr200, Ala205, 226–227 (SA), and 242–245 (SKFD). ATP-binding positions include Arg70, 85–90 (MLTITD), Val130, 151–152 (HR), Arg152, and Lys170. The AMPK pseudosubstrate motif lies at 138 to 159 (LFDAVSSLIRNKIHRLPVIDPE). 242-245 (SKFD) provides a ligand contact to ADP. ATP is bound at residue 242–245 (SKFD). Ser261 is modified (phosphoserine; by ULK1). Residue Thr263 is modified to Phosphothreonine; by ULK1. Arg269 contributes to the ADP binding site. Residue Arg269 participates in AMP binding. Arg269 is a binding site for ATP. A Phosphoserine; by ULK1 modification is found at Ser270. The CBS 4 domain occupies 272 to 329 (YFEGVLKCYLHETLETIINRLVEAEVHRLVVVDENDVVKGIVSLSDILQALVLTGGEK). Residues Leu277 and 298–299 (HR) each bind ADP. Residues Leu277, His298, 298–299 (HR), and 314–317 (SLSD) each bind AMP. Residues Leu277 and 298 to 299 (HR) contribute to the ATP site.

Belongs to the 5'-AMP-activated protein kinase gamma subunit family. As to quaternary structure, AMPK is a heterotrimer of an alpha catalytic subunit (PRKAA1 or PRKAA2), a beta (PRKAB1 or PRKAB2) and a gamma non-catalytic subunits (PRKAG1, PRKAG2 or PRKAG3). Interacts with FNIP1 and FNIP2. In terms of processing, phosphorylated by ULK1 and ULK2; leading to negatively regulate AMPK activity and suggesting the existence of a regulatory feedback loop between ULK1, ULK2 and AMPK. Glycosylated; O-GlcNAcylated by OGT, promoting the AMP-activated protein kinase (AMPK) activity.

Its function is as follows. AMP/ATP-binding subunit of AMP-activated protein kinase (AMPK), an energy sensor protein kinase that plays a key role in regulating cellular energy metabolism. In response to reduction of intracellular ATP levels, AMPK activates energy-producing pathways and inhibits energy-consuming processes: inhibits protein, carbohydrate and lipid biosynthesis, as well as cell growth and proliferation. AMPK acts via direct phosphorylation of metabolic enzymes, and by longer-term effects via phosphorylation of transcription regulators. Also acts as a regulator of cellular polarity by remodeling the actin cytoskeleton; probably by indirectly activating myosin. Gamma non-catalytic subunit mediates binding to AMP, ADP and ATP, leading to activate or inhibit AMPK: AMP-binding results in allosteric activation of alpha catalytic subunit (PRKAA1 or PRKAA2) both by inducing phosphorylation and preventing dephosphorylation of catalytic subunits. ADP also stimulates phosphorylation, without stimulating already phosphorylated catalytic subunit. ATP promotes dephosphorylation of catalytic subunit, rendering the AMPK enzyme inactive. The sequence is that of 5'-AMP-activated protein kinase subunit gamma-1 (PRKAG1) from Sus scrofa (Pig).